A 232-amino-acid chain; its full sequence is Sensory rhodopsin III (232 aa).

A run of 7 helical transmembrane segments spans residues isoleucine 5–phenylalanine 25, leucine 39–glycine 59, phenylalanine 73–valine 93, leucine 100–glycine 120, isoleucine 125–phenylalanine 145, valine 168–isoleucine 188, and asparagine 194–valine 214. N6-(retinylidene)lysine is present on lysine 205.

It belongs to the archaeal/bacterial/fungal opsin family. As to quaternary structure, interacts with HtrM. Post-translationally, the covalent binding of retinal to the apoprotein, bacterioopsin, generates bacteriorhodopsin.

The protein resides in the membrane. Sensory rhodopsin. Associates with an unusual transducer lacking a methyl-accepting transducer domain found in all other photosensory transducers. The chromophore is all-trans-retinal in the dark. The polypeptide is Sensory rhodopsin III (xop2) (Haloarcula marismortui (strain ATCC 43049 / DSM 3752 / JCM 8966 / VKM B-1809) (Halobacterium marismortui)).